The chain runs to 520 residues: Nonsense-mediated mRNA decay factor SMG9 (520 aa).

Disordered regions lie at residues 1-94 and 107-143; these read MSES…PAPL and GKGPVAATGASTPEGTAPPPPTAPAPPKGEKEGQRPT. Ser2 carries the post-translational modification N-acetylserine. Residues Ser2, Ser4, Ser7, Ser32, and Ser53 each carry the phosphoserine modification. Positions 36 to 53 are enriched in basic and acidic residues; that stretch reads GRERDYIAPWERERRDGS. The span at 78–94 shows a compositional bias: pro residues; sequence QPPPSTAPAAPPAPAPL. A compositionally biased stretch (low complexity) spans 112–121; that stretch reads AATGASTPEG. Positions 122 to 133 are enriched in pro residues; the sequence is TAPPPPTAPAPP. Phosphoserine is present on Ser451.

The protein belongs to the SMG9 family. In terms of assembly, self-associates to form homodimers and forms heterodimers with SMG8; these assembly forms may represent SMG1C intermediate forms. Component of the SMG1C complex composed of SMG1, SMG8 and SMG9. Interacts with DHX34; the interaction is RNA-independent. Phosphorylated by SMG1.

Functionally, involved in nonsense-mediated decay (NMD) of mRNAs containing premature stop codons. Is recruited by release factors to stalled ribosomes together with SMG1 and SMG8 (forming the SMG1C protein kinase complex) and, in the SMG1C complex, is required for the efficient association between SMG1 and SMG8. Plays a role in brain, heart, and eye development. This is Nonsense-mediated mRNA decay factor SMG9 from Rattus norvegicus (Rat).